The primary structure comprises 61 residues: Truncated 3-beta hydroxy-5-ene steroid dehydrogenase homolog (61 aa).

This sequence belongs to the 3-beta-HSD family.

The chain is Truncated 3-beta hydroxy-5-ene steroid dehydrogenase homolog from Variola virus (isolate Human/India/Ind3/1967) (VARV).